A 376-amino-acid chain; its full sequence is Queuine tRNA-ribosyltransferase (376 aa).

Asp90 (proton acceptor) is an active-site residue. Residues Asp90–Phe94, Asp144, Gln193, and Gly220 each bind substrate. An RNA binding region spans residues Gly251–Asp257. Asp270 functions as the Nucleophile in the catalytic mechanism. An RNA binding; important for wobble base 34 recognition region spans residues Thr275–Arg279. Zn(2+) contacts are provided by Cys308, Cys310, Cys313, and His339.

This sequence belongs to the queuine tRNA-ribosyltransferase family. In terms of assembly, homodimer. Within each dimer, one monomer is responsible for RNA recognition and catalysis, while the other monomer binds to the replacement base PreQ1. Zn(2+) is required as a cofactor.

The catalysed reaction is 7-aminomethyl-7-carbaguanine + guanosine(34) in tRNA = 7-aminomethyl-7-carbaguanosine(34) in tRNA + guanine. It participates in tRNA modification; tRNA-queuosine biosynthesis. In terms of biological role, catalyzes the base-exchange of a guanine (G) residue with the queuine precursor 7-aminomethyl-7-deazaguanine (PreQ1) at position 34 (anticodon wobble position) in tRNAs with GU(N) anticodons (tRNA-Asp, -Asn, -His and -Tyr). Catalysis occurs through a double-displacement mechanism. The nucleophile active site attacks the C1' of nucleotide 34 to detach the guanine base from the RNA, forming a covalent enzyme-RNA intermediate. The proton acceptor active site deprotonates the incoming PreQ1, allowing a nucleophilic attack on the C1' of the ribose to form the product. After dissociation, two additional enzymatic reactions on the tRNA convert PreQ1 to queuine (Q), resulting in the hypermodified nucleoside queuosine (7-(((4,5-cis-dihydroxy-2-cyclopenten-1-yl)amino)methyl)-7-deazaguanosine). The protein is Queuine tRNA-ribosyltransferase of Cupriavidus taiwanensis (strain DSM 17343 / BCRC 17206 / CCUG 44338 / CIP 107171 / LMG 19424 / R1) (Ralstonia taiwanensis (strain LMG 19424)).